Consider the following 277-residue polypeptide: Formamidopyrimidine-DNA glycosylase (277 aa).

Pro-2 functions as the Schiff-base intermediate with DNA in the catalytic mechanism. Glu-3 functions as the Proton donor in the catalytic mechanism. Lys-58 functions as the Proton donor; for beta-elimination activity in the catalytic mechanism. The DNA site is built by His-97, Arg-116, and Arg-158. An FPG-type zinc finger spans residues 243 to 277; that stretch reads NVYGRAGAPCPRCGRSIRQRRIAQRSTWYCPGCQR. The active-site Proton donor; for delta-elimination activity is Arg-267.

The protein belongs to the FPG family. As to quaternary structure, monomer. It depends on Zn(2+) as a cofactor.

It catalyses the reaction Hydrolysis of DNA containing ring-opened 7-methylguanine residues, releasing 2,6-diamino-4-hydroxy-5-(N-methyl)formamidopyrimidine.. The catalysed reaction is 2'-deoxyribonucleotide-(2'-deoxyribose 5'-phosphate)-2'-deoxyribonucleotide-DNA = a 3'-end 2'-deoxyribonucleotide-(2,3-dehydro-2,3-deoxyribose 5'-phosphate)-DNA + a 5'-end 5'-phospho-2'-deoxyribonucleoside-DNA + H(+). Its function is as follows. Involved in base excision repair of DNA damaged by oxidation or by mutagenic agents. Acts as a DNA glycosylase that recognizes and removes damaged bases. Has a preference for oxidized purines, such as 7,8-dihydro-8-oxoguanine (8-oxoG). Has AP (apurinic/apyrimidinic) lyase activity and introduces nicks in the DNA strand. Cleaves the DNA backbone by beta-delta elimination to generate a single-strand break at the site of the removed base with both 3'- and 5'-phosphates. This chain is Formamidopyrimidine-DNA glycosylase, found in Alkalilimnicola ehrlichii (strain ATCC BAA-1101 / DSM 17681 / MLHE-1).